The chain runs to 86 residues: Large ribosomal subunit protein bL27 (86 aa).

The interval 1-22 is disordered; sequence MAHKKAGGSTRNGRDSESKRLG.

It belongs to the bacterial ribosomal protein bL27 family.

The polypeptide is Large ribosomal subunit protein bL27 (Vibrio cholerae serotype O1 (strain ATCC 39315 / El Tor Inaba N16961)).